A 467-amino-acid polypeptide reads, in one-letter code: Tel2-interacting protein 2 (467 aa).

The stretch at 4-45 (YKELARRLHTLQSKNEKEALEKQIDFLDKLVVEVDSLVHEQD) forms a coiled coil.

This sequence belongs to the TTI2 family. As to quaternary structure, component of the TTT complex composed of tel2, tti1 and tti2. Interacts with tel2 and ttiI1. Component of the ASTRA complex composed of at least rvb1, rvb2, tra1, tel2, tti1 and tti2.

It is found in the nucleus. Component of the tel2-tti1-tti2 (TTT) complex that stabilizes protein levels of the phosphatidylinositol 3-kinase-related protein kinase (PIKK) family proteins. The TTT complex is involved in the cellular resistance to DNA damage stresses, like ionizing radiation (IR), ultraviolet (UV) and mitomycin C (MMC). Component of the ASTRA complex involved in chromatin remodeling. This chain is Tel2-interacting protein 2, found in Schizosaccharomyces pombe (strain 972 / ATCC 24843) (Fission yeast).